The primary structure comprises 242 residues: HTH domain-truncated transcriptional regulator QseD (242 aa).

The protein belongs to the LysR transcriptional regulatory family.

Functionally, represses EHEC virulence expression. Down-regulates expression of LEE (locus of enterocyte effacement) and iraD genes, and alters AE (attaching and effacing) lesion formation. May regulate transcription through interactions with another HTH DNA-binding protein. The polypeptide is HTH domain-truncated transcriptional regulator QseD (qseD) (Escherichia coli O157:H7).